The sequence spans 216 residues: Uracil phosphoribosyltransferase (216 aa).

5-phospho-alpha-D-ribose 1-diphosphate is bound by residues Arg85, Arg110, and 135–143 (DPMVATGYS). Uracil is bound by residues Ile200 and 205–207 (GDA). Asp206 serves as a coordination point for 5-phospho-alpha-D-ribose 1-diphosphate.

This sequence belongs to the UPRTase family. The cofactor is Mg(2+).

It carries out the reaction UMP + diphosphate = 5-phospho-alpha-D-ribose 1-diphosphate + uracil. Its pathway is pyrimidine metabolism; UMP biosynthesis via salvage pathway; UMP from uracil: step 1/1. Allosterically activated by GTP. Its function is as follows. Catalyzes the conversion of uracil and 5-phospho-alpha-D-ribose 1-diphosphate (PRPP) to UMP and diphosphate. In Burkholderia cenocepacia (strain ATCC BAA-245 / DSM 16553 / LMG 16656 / NCTC 13227 / J2315 / CF5610) (Burkholderia cepacia (strain J2315)), this protein is Uracil phosphoribosyltransferase.